The sequence spans 316 residues: Porphobilinogen deaminase (316 aa).

At cysteine 245 the chain carries S-(dipyrrolylmethanemethyl)cysteine.

The protein belongs to the HMBS family. Monomer. Requires dipyrromethane as cofactor.

The enzyme catalyses 4 porphobilinogen + H2O = hydroxymethylbilane + 4 NH4(+). The protein operates within porphyrin-containing compound metabolism; protoporphyrin-IX biosynthesis; coproporphyrinogen-III from 5-aminolevulinate: step 2/4. Its pathway is porphyrin-containing compound metabolism; chlorophyll biosynthesis. Tetrapolymerization of the monopyrrole PBG into the hydroxymethylbilane pre-uroporphyrinogen in several discrete steps. The protein is Porphobilinogen deaminase of Prochlorococcus marinus (strain MIT 9312).